Consider the following 57-residue polypeptide: UPF0391 membrane protein Arad_3976 (57 aa).

2 helical membrane-spanning segments follow: residues 4–24 and 33–53; these read WAII…SGVS and VLFA…VMAG.

Belongs to the UPF0391 family.

It localises to the cell membrane. This is UPF0391 membrane protein Arad_3976 from Rhizobium rhizogenes (strain K84 / ATCC BAA-868) (Agrobacterium radiobacter).